Reading from the N-terminus, the 293-residue chain is Probable 2-(5''-triphosphoribosyl)-3'-dephosphocoenzyme-A synthase (293 aa).

It belongs to the CitG/MdcB family.

It carries out the reaction 3'-dephospho-CoA + ATP = 2'-(5''-triphospho-alpha-D-ribosyl)-3'-dephospho-CoA + adenine. In terms of biological role, involved in the formation of 2-(5''-phosphoribosyl)-3'-dephosphocoenzyme-A, the prosthetic group of the acyl-carrier protein of the malonate decarboxylase. This is Probable 2-(5''-triphosphoribosyl)-3'-dephosphocoenzyme-A synthase from Pseudomonas aeruginosa (strain UCBPP-PA14).